The chain runs to 608 residues: UvrABC system protein C (608 aa).

The GIY-YIG domain maps to 16-94 (NRPGVYRMFD…IKEWRPPYNI (79 aa)). Residues 204–239 (NALADELNVGMEQAAMRLDFEKAAELRDQVAILRRV) form the UVR domain.

It belongs to the UvrC family. As to quaternary structure, interacts with UvrB in an incision complex.

Its subcellular location is the cytoplasm. In terms of biological role, the UvrABC repair system catalyzes the recognition and processing of DNA lesions. UvrC both incises the 5' and 3' sides of the lesion. The N-terminal half is responsible for the 3' incision and the C-terminal half is responsible for the 5' incision. This chain is UvrABC system protein C, found in Pseudomonas aeruginosa (strain ATCC 15692 / DSM 22644 / CIP 104116 / JCM 14847 / LMG 12228 / 1C / PRS 101 / PAO1).